A 183-amino-acid polypeptide reads, in one-letter code: ATP-dependent protease subunit HslV (183 aa).

Threonine 7 is an active-site residue. Residues glycine 162, cysteine 165, and threonine 168 each contribute to the Na(+) site.

Belongs to the peptidase T1B family. HslV subfamily. A double ring-shaped homohexamer of HslV is capped on each side by a ring-shaped HslU homohexamer. The assembly of the HslU/HslV complex is dependent on binding of ATP.

Its subcellular location is the cytoplasm. It catalyses the reaction ATP-dependent cleavage of peptide bonds with broad specificity.. With respect to regulation, allosterically activated by HslU binding. In terms of biological role, protease subunit of a proteasome-like degradation complex believed to be a general protein degrading machinery. This chain is ATP-dependent protease subunit HslV, found in Chromobacterium violaceum (strain ATCC 12472 / DSM 30191 / JCM 1249 / CCUG 213 / NBRC 12614 / NCIMB 9131 / NCTC 9757 / MK).